A 1324-amino-acid chain; its full sequence is Ubiquitin carboxyl-terminal hydrolase 42 (1324 aa).

2 disordered regions span residues 1–38 (MTIVDKASESSDPSAYQNQPGSSEAVSPGDMDAGSASW) and 63–87 (YSSSSVPDKSKPSPQKDQALGDGIA). The segment covering 10 to 25 (SSDPSAYQNQPGSSEA) has biased composition (polar residues). Positions 63–80 (YSSSSVPDKSKPSPQKDQ) are enriched in low complexity. Position 75 is a phosphoserine (Ser75). A USP domain is found at 111-412 (AGLQNLGNTC…QAYVLFYIRS (302 aa)). Cys120 serves as the catalytic Nucleophile. His371 functions as the Proton acceptor in the catalytic mechanism. Disordered stretches follow at residues 452–494 (IGPQ…NRAS), 536–707 (QSQP…MPAP), 722–1026 (LSNK…RHRS), 1085–1131 (RAGL…HPDR), 1149–1254 (DRFH…VKDS), and 1275–1294 (GGFPLSGGPPLEGVGPFREK). The segment covering 477-489 (PSSSMSSPNGNSS) has biased composition (low complexity). Position 483 is a phosphoserine (Ser483). Positions 536-564 (QSQPNLHSNSLENPTKPVPSSTITNSAVQ) are enriched in polar residues. Low complexity predominate over residues 565–576 (STSNASTMSVSS). Residues 586–603 (ESCSQPVMNGKSKLNSSV) are compositionally biased toward polar residues. 2 positions are modified to phosphoserine: Ser754 and Ser856. Basic and acidic residues-rich tracts occupy residues 938–974 (AKEKIGSLRKVDRGHYRSRRERSSSGEPARESRSKTE), 984–1013 (CPRERDRQDRHAPEHHPGHGDRLSPGERRS), 1101–1113 (RGCEPARERERHR), 1149–1158 (DRFHEHENGK), and 1165–1191 (DSVENSDSHVEKKARRSEQKDPLEEPK). Phosphoserine is present on Ser1181. Residues 1192–1206 (AKKHKKSKKKKKSKD) show a composition bias toward basic residues. Residues 1207 to 1218 (KHRDRDSRHQQD) show a composition bias toward basic and acidic residues. Phosphoserine occurs at positions 1219, 1222, and 1226. Positions 1231 to 1245 (HRHKKKKKKKKRHSR) are enriched in basic residues. At Ser1247 the chain carries Phosphoserine.

It belongs to the peptidase C19 family. In terms of tissue distribution, broadly expressed.

The catalysed reaction is Thiol-dependent hydrolysis of ester, thioester, amide, peptide and isopeptide bonds formed by the C-terminal Gly of ubiquitin (a 76-residue protein attached to proteins as an intracellular targeting signal).. Its function is as follows. Deubiquitinating enzyme which may play an important role during spermatogenesis. The protein is Ubiquitin carboxyl-terminal hydrolase 42 (USP42) of Homo sapiens (Human).